A 149-amino-acid chain; its full sequence is Large ribosomal subunit protein eL19 (149 aa).

A disordered region spans residues 45-130 (VDEGAIQAKD…RDLYDKAGGG (86 aa)). A compositionally biased stretch (basic residues) spans 58 to 85 (NSRGRARERQKKRAYGHQKGAGSRKGKA). Over residues 90-113 (NSKEDWESRIRAQRTKLRELRDEG) the composition is skewed to basic and acidic residues.

The protein belongs to the eukaryotic ribosomal protein eL19 family. Part of the 50S ribosomal subunit.

In terms of biological role, binds to the 23S rRNA. Located at the polypeptide exit tunnel on the outside of the subunit. The chain is Large ribosomal subunit protein eL19 from Haloarcula marismortui (strain ATCC 43049 / DSM 3752 / JCM 8966 / VKM B-1809) (Halobacterium marismortui).